Reading from the N-terminus, the 250-residue chain is MEQNKCALVTGSSRGVGKAAAIRLAENGYNIVINYARSKKAALETAEEIEKLGVKVLVVKANVGQPAKIKEMFQQIDETFGRLDVFVNNAASGVLRPVMELEETHWDWTMNINAKALLFCAQEAAKLMEKNGGGHIVSISSLGSIRYLENYTTVGVSKAALEALTRYLAVELSPKQIIVNAVSGGAIDTDALKHFPNREDLLEDARQNTPAGRMVEIKDMVDTVEFLVSSKADMIRGQTIIVDGGRSLLV.

NADP(+) is bound by residues 13–16 (SRGV), 36–38 (ARS), 62–63 (NV), and asparagine 89. Active-site proton acceptor residues include tyrosine 151 and lysine 158. Residues lysine 158 and 187–189 (IDT) each bind NADP(+).

Belongs to the short-chain dehydrogenases/reductases (SDR) family. Homotetramer.

The catalysed reaction is a 2,3-saturated acyl-[ACP] + NADP(+) = a (2E)-enoyl-[ACP] + NADPH + H(+). It carries out the reaction (2E)-butenoyl-[ACP] + NADPH + H(+) = butanoyl-[ACP] + NADP(+). The protein operates within lipid metabolism; fatty acid biosynthesis. With respect to regulation, inhibited by triclosan. Functionally, catalyzes the reduction of a carbon-carbon double bond in an enoyl moiety that is covalently linked to an acyl carrier protein (ACP). It confers resistance to triclosan. The polypeptide is Enoyl-[acyl-carrier-protein] reductase [NADPH] FabL (fabL) (Bacillus subtilis (strain 168)).